A 1288-amino-acid chain; its full sequence is Peroxidasin homolog (1288 aa).

The signal sequence occupies residues 1–16; the sequence is MNLLLYLLLLVPWVLG. The region spanning 17-51 is the LRRNT domain; the sequence is SEDGCPAKCTCDKKGFTVDCSNAGLTRIPKGISSN. 7 LRR repeats span residues 27–49, 50–72, 73–96, 97–120, 122–143, 145–168, and 204–227; these read CDKK…KGIS, SNVR…DLEG, FPLL…ILDH, LPEL…ASES, PLAS…WLLQ, FPEL…LFEN, and AYCT…LLKC. One can recognise an LRRCT domain in the interval 180–228; that stretch reads NPWNCDCRVTKVKALLRKVEWERKAYCTNPVELRHQAIDEVEESLLKCA. Asn247 carries an N-linked (GlcNAc...) asparagine glycan. The tract at residues 304 to 323 is disordered; it reads LRQSHHSNGAPQFTYKPRDN. 2 Ig-like C2-type domains span residues 314 to 400 and 407 to 494; these read PQFT…FSLD and PNIY…AKLT. Residues Cys335 and Cys384 are joined by a disulfide bond. 2 LRR repeats span residues 356–381 and 387–412; these read SSRK…DSGR and VNSL…IYEG. A disulfide bridge connects residues Cys428 and Cys478. Residue Asn594 is glycosylated (N-linked (GlcNAc...) asparagine). A disulfide bridge connects residues Cys624 and Cys640. Residue Asp718 coordinates heme b. Residue His719 is the Proton acceptor of the active site. Asp720 is a binding site for Ca(2+). 2 disulfide bridges follow: Cys739-Cys749 and Cys743-Cys770. An N-linked (GlcNAc...) asparagine glycan is attached at Asn740. Positions 802, 804, 806, and 808 each coordinate Ca(2+). Asn857 carries N-linked (GlcNAc...) asparagine glycosylation. Heme b-binding residues include Glu876 and His972. LRR repeat units lie at residues 998-1022 and 1049-1073; these read KAFF…LFAS and SLDL…EYRQ. 2 disulfide bridges follow: Cys1075–Cys1132 and Cys1173–Cys1200. Residues 1168-1189 form an LRR 12 repeat; that stretch reads LARLLCDNGDEIDRIQKDVFMY.

The protein belongs to the peroxidase family. XPO subfamily. The cofactor is Ca(2+). It depends on heme b as a cofactor.

The protein resides in the secreted. Its subcellular location is the extracellular space. The protein localises to the extracellular matrix. The catalysed reaction is L-lysyl-[collagen] + L-methionyl-[collagen] + H2O2 = [collagen]-L-lysyl-N-S-L-methionyl-[collagen] + 2 H2O + H(+). The enzyme catalyses bromide + H2O2 = hypobromite + H2O. It carries out the reaction L-lysyl-[collagen] + L-methionyl-[collagen] + hypobromite = [collagen]-L-lysyl-N-S-L-methionyl-[collagen] + bromide + H2O + H(+). It catalyses the reaction L-tyrosyl-[protein] + bromide + H2O2 + H(+) = 3-bromo-L-tyrosyl-[protein] + 2 H2O. The catalysed reaction is hypobromite + L-tyrosyl-[protein] + H(+) = 3-bromo-L-tyrosyl-[protein] + H2O. Functionally, catalyzes the two-electron oxidation of bromide by hydrogen peroxide and generates hypobromite as a reactive intermediate which mediates the formation of sulfilimine cross-links between methionine and hydroxylysine residues within an uncross-linked collagen IV NC1 hexamer. Plays a role in the attachment of tissues and in axonal guidance during early developmental stages. May functionally antagonize the peroxidasin pxn-2 to maintain neuronal development. This is Peroxidasin homolog from Caenorhabditis briggsae.